The following is a 357-amino-acid chain: Fructose-bisphosphate aldolase, cytoplasmic isozyme 1 (357 aa).

Arg52 and Lys142 together coordinate substrate. Glu183 serves as the catalytic Proton acceptor. The active-site Schiff-base intermediate with dihydroxyacetone-P is Lys225.

The protein belongs to the class I fructose-bisphosphate aldolase family.

It localises to the cytoplasm. The enzyme catalyses beta-D-fructose 1,6-bisphosphate = D-glyceraldehyde 3-phosphate + dihydroxyacetone phosphate. It participates in carbohydrate degradation; glycolysis; D-glyceraldehyde 3-phosphate and glycerone phosphate from D-glucose: step 4/4. This chain is Fructose-bisphosphate aldolase, cytoplasmic isozyme 1, found in Pisum sativum (Garden pea).